Consider the following 194-residue polypeptide: NAD(P)H-quinone oxidoreductase subunit I (194 aa).

2 4Fe-4S ferredoxin-type domains span residues 55-84 (GRIH…VDWE) and 95-124 (NHYS…MTEE). [4Fe-4S] cluster is bound by residues Cys-64, Cys-67, Cys-70, Cys-74, Cys-104, Cys-107, Cys-110, and Cys-114. The interval 173 to 194 (DLPANAPRPGARPEDLVEKTEA) is disordered. Over residues 183–194 (ARPEDLVEKTEA) the composition is skewed to basic and acidic residues.

The protein belongs to the complex I 23 kDa subunit family. In terms of assembly, NDH-1 is composed of at least 11 different subunits. [4Fe-4S] cluster is required as a cofactor.

The protein localises to the cellular thylakoid membrane. It carries out the reaction a plastoquinone + NADH + (n+1) H(+)(in) = a plastoquinol + NAD(+) + n H(+)(out). The catalysed reaction is a plastoquinone + NADPH + (n+1) H(+)(in) = a plastoquinol + NADP(+) + n H(+)(out). In terms of biological role, NDH-1 shuttles electrons from an unknown electron donor, via FMN and iron-sulfur (Fe-S) centers, to quinones in the respiratory and/or the photosynthetic chain. The immediate electron acceptor for the enzyme in this species is believed to be plastoquinone. Couples the redox reaction to proton translocation, and thus conserves the redox energy in a proton gradient. The polypeptide is NAD(P)H-quinone oxidoreductase subunit I (Nostoc sp. (strain PCC 7120 / SAG 25.82 / UTEX 2576)).